The primary structure comprises 355 residues: Poly(3-hydroxyalkanoate) polymerase subunit PhaC (355 aa).

An AB hydrolase-1 domain is found at 69–334 (PLLIVYALVN…LAFPGGHIGI (266 aa)). Cysteine 149 is a catalytic residue.

It belongs to the PHA/PHB synthase family. Type III PhaC subfamily. In terms of assembly, a large complex of PhaC and PhaE; the ratio of the subunits has been estimated to be from 1:1 to 4:1, with more PhaE than PhaC.

Its subcellular location is the cytoplasm. The enzyme catalyses (3R)-3-hydroxybutanoyl-CoA + [(3R)-hydroxybutanoate](n) = [(3R)-hydroxybutanoate](n+1) + CoA. Its pathway is biopolymer metabolism; poly-(R)-3-hydroxybutanoate biosynthesis. Its function is as follows. Polymerizes D(-)-3-hydroxybutyryl-CoA to create polyhydroxybutyrate (PHB) which consists of thousands of hydroxybutyrate molecules linked end to end. This subunit has catalytic activity that is enhanced 100-fold by PhaE, the non-catalytic subunit. The sequence is that of Poly(3-hydroxyalkanoate) polymerase subunit PhaC from Allochromatium vinosum (strain ATCC 17899 / DSM 180 / NBRC 103801 / NCIMB 10441 / D) (Chromatium vinosum).